The primary structure comprises 191 residues: Pyridoxal 5'-phosphate synthase subunit PdxT (191 aa).

52–54 contacts L-glutamine; sequence GES. Catalysis depends on Cys81, which acts as the Nucleophile. L-glutamine is bound by residues Arg108 and 136 to 137; that span reads IR. Active-site charge relay system residues include His172 and Glu174.

It belongs to the glutaminase PdxT/SNO family. As to quaternary structure, in the presence of PdxS, forms a dodecamer of heterodimers. Only shows activity in the heterodimer.

It carries out the reaction aldehydo-D-ribose 5-phosphate + D-glyceraldehyde 3-phosphate + L-glutamine = pyridoxal 5'-phosphate + L-glutamate + phosphate + 3 H2O + H(+). It catalyses the reaction L-glutamine + H2O = L-glutamate + NH4(+). Its pathway is cofactor biosynthesis; pyridoxal 5'-phosphate biosynthesis. In terms of biological role, catalyzes the hydrolysis of glutamine to glutamate and ammonia as part of the biosynthesis of pyridoxal 5'-phosphate. The resulting ammonia molecule is channeled to the active site of PdxS. In Actinobacillus pleuropneumoniae serotype 5b (strain L20), this protein is Pyridoxal 5'-phosphate synthase subunit PdxT.